A 305-amino-acid polypeptide reads, in one-letter code: MIKQRTLKQGIKVTGVGLHSGNKVTLNLRPAAANTGVVYCRTDLNPPVSFPADAKAVRDTMLCTALVNDEGVRISTVEHLNAALAGLGIDNIIIEVDAPEIPIMDGSASPFVYLLLDAGIEEQDAPKKFIRVKKKVRVEDGDKWAEILPYNGFRLNFTIDFNHPAITKNLSTYTLDFSAQKFVQQISRARTFAFMKDIEYLQSQGLALGGSLDNAIVLDNYRVLNEEGLRFKDELVRHKMLDSIGDLFMCGYNMIGEFKAYKSGHGLNNKLLRALLEDQEAWEFATFEDKEKVPQGYTVGAQVLI.

Residues H79, H238, and D242 each contribute to the Zn(2+) site. H265 serves as the catalytic Proton donor.

This sequence belongs to the LpxC family. Zn(2+) serves as cofactor.

It carries out the reaction a UDP-3-O-[(3R)-3-hydroxyacyl]-N-acetyl-alpha-D-glucosamine + H2O = a UDP-3-O-[(3R)-3-hydroxyacyl]-alpha-D-glucosamine + acetate. It participates in glycolipid biosynthesis; lipid IV(A) biosynthesis; lipid IV(A) from (3R)-3-hydroxytetradecanoyl-[acyl-carrier-protein] and UDP-N-acetyl-alpha-D-glucosamine: step 2/6. In terms of biological role, catalyzes the hydrolysis of UDP-3-O-myristoyl-N-acetylglucosamine to form UDP-3-O-myristoylglucosamine and acetate, the committed step in lipid A biosynthesis. The protein is UDP-3-O-acyl-N-acetylglucosamine deacetylase of Actinobacillus succinogenes (strain ATCC 55618 / DSM 22257 / CCUG 43843 / 130Z).